The chain runs to 445 residues: Phosphoglucosamine mutase (445 aa).

Ser102 serves as the catalytic Phosphoserine intermediate. Mg(2+)-binding residues include Ser102, Asp241, Asp243, and Asp245. Ser102 is modified (phosphoserine).

This sequence belongs to the phosphohexose mutase family. The cofactor is Mg(2+). Post-translationally, activated by phosphorylation.

It catalyses the reaction alpha-D-glucosamine 1-phosphate = D-glucosamine 6-phosphate. Its function is as follows. Catalyzes the conversion of glucosamine-6-phosphate to glucosamine-1-phosphate. This is Phosphoglucosamine mutase from Haemophilus influenzae (strain ATCC 51907 / DSM 11121 / KW20 / Rd).